The sequence spans 41 residues: Inducible serine protease inhibitor 3 (41 aa).

Functionally, inhibits trypsin and the toxin proteases PR1 and PR2 of M.anisopliae. Does not inhibit chymotrypsin, subtilisin Carlsberg, proteinase K and porcine pancreatic elastase. This is Inducible serine protease inhibitor 3 from Galleria mellonella (Greater wax moth).